Here is a 717-residue protein sequence, read N- to C-terminus: P-loop NTPase domain-containing protein LPA1 homolog 2 (717 aa).

Disordered regions lie at residues 235–259 and 532–629; these read KKLK…SSTT and HYSS…DTIS. 2 stretches are compositionally biased toward polar residues: residues 243–259 and 532–545; these read VNSN…SSTT and HYSS…TSDG. Acidic residues predominate over residues 559 to 582; it reads SDEDDEEGDDDFHEPDSDEDLSDN. The segment covering 583–602 has biased composition (basic and acidic residues); sequence NDERNRDEIGSVDEESTKSD.

In terms of biological role, may be not required for the accumulation of phytic acid in seeds. Phytic acid is the primary storage form of phosphorus in cereal grains and other plant seeds. The chain is P-loop NTPase domain-containing protein LPA1 homolog 2 from Arabidopsis thaliana (Mouse-ear cress).